A 322-amino-acid polypeptide reads, in one-letter code: Acetylglutamate kinase (322 aa).

Substrate is bound by residues 85-86 (GG), R107, and N211.

It belongs to the acetylglutamate kinase family. ArgB subfamily.

The protein resides in the cytoplasm. It carries out the reaction N-acetyl-L-glutamate + ATP = N-acetyl-L-glutamyl 5-phosphate + ADP. The protein operates within amino-acid biosynthesis; L-arginine biosynthesis; N(2)-acetyl-L-ornithine from L-glutamate: step 2/4. In terms of biological role, catalyzes the ATP-dependent phosphorylation of N-acetyl-L-glutamate. The protein is Acetylglutamate kinase of Methanosarcina barkeri (strain Fusaro / DSM 804).